Reading from the N-terminus, the 105-residue chain is Nucleoid-associated protein MXAN_1931 (105 aa).

Belongs to the YbaB/EbfC family. As to quaternary structure, homodimer.

It localises to the cytoplasm. It is found in the nucleoid. Binds to DNA and alters its conformation. May be involved in regulation of gene expression, nucleoid organization and DNA protection. The polypeptide is Nucleoid-associated protein MXAN_1931 (Myxococcus xanthus (strain DK1622)).